The sequence spans 110 residues: Snake venom vascular endothelial growth factor toxin HF (110 aa).

Gln-1 is subject to Pyrrolidone carboxylic acid. Intrachain disulfides connect Cys-14–Cys-56, Cys-45–Cys-91, and Cys-49–Cys-93.

The protein belongs to the PDGF/VEGF growth factor family. Snake venom VEGF subfamily. In terms of assembly, homodimer; disulfide-linked. Interacts with VEGF receptor-2 (KDR) with high affinity. Expressed by the venom gland.

Its subcellular location is the secreted. Its function is as follows. Snake venom VEGFs that may contribute to venom dispersion and prey subjugation by inducing vascular permeability and hypotension. This protein induces an increase in capillary permeability after intradermal injection, as well as a drastic hypotensive effect after intravenous injection. The hypotension is mediated by nitric oxide (NO), which is produced by VEGF-activated endothelium NO synthase. Also induces angiogenesis in vitro, probably through VEGF receptor (KDR/VEGFR-2) signaling. This chain is Snake venom vascular endothelial growth factor toxin HF, found in Vipera aspis aspis (Aspic viper).